A 372-amino-acid chain; its full sequence is Flagellar P-ring protein (372 aa).

The first 29 residues, 1–29 (MPARPIPVPAFALALALAAALAVPAPAAA), serve as a signal peptide directing secretion.

It belongs to the FlgI family. In terms of assembly, the basal body constitutes a major portion of the flagellar organelle and consists of four rings (L,P,S, and M) mounted on a central rod.

It is found in the periplasm. The protein resides in the bacterial flagellum basal body. In terms of biological role, assembles around the rod to form the L-ring and probably protects the motor/basal body from shearing forces during rotation. The protein is Flagellar P-ring protein of Anaeromyxobacter dehalogenans (strain 2CP-1 / ATCC BAA-258).